The primary structure comprises 268 residues: Putative hydro-lyase ACICU_01268 (268 aa).

It belongs to the D-glutamate cyclase family.

The sequence is that of Putative hydro-lyase ACICU_01268 from Acinetobacter baumannii (strain ACICU).